Consider the following 91-residue polypeptide: uncharacterized protein (91 aa).

Its subcellular location is the plastid. The protein localises to the chloroplast. This is an uncharacterized protein from Phalaenopsis aphrodite subsp. formosana (Moth orchid).